A 775-amino-acid polypeptide reads, in one-letter code: MSSSSPTGQIASAADIKQENGMESASEGQEAHREVAGGAAAGLSPPAPAPFPLEPGDAAAASRVSREEGAAAAGAADQVQLHSELLGRHQHAAAAQPPLAFSPDHVACVCEALQQGGNLDRLARFLWSLPQSDLLRGNESLLKARALVAFHQGIYPELYSILESHSFESANHPLLQQLWYKARYTEAERARGRPLGAVDKYRLRRKFPLPRTIWDGEETVYCFKEKSRNALKELYKQNRYPSPAEKRHLAKITGLSLTQVSNWFKNRRQRDRNPSETQSKSESDGNPSTEDESSKGHEDLSPHPLSGASDGVTNLSLSSHVEPVYMQQIGNAKISLSSSGVLLNGSLVPASTSPVFLNGNSFIQGHNGVILNGLNVGNTQTVSLNPPKMSSNIVGNGIAMTDILGSTSQDVKEFKVLQSSAVNSAATTSYSPSAPVSFPGLIPCTEVKREGIQTVASQDGGSVVTFTTPVQINQYGIVQIPNSGANGQFLNGSIGFSPLQLPPVSVAASQGNLSVTPSTSDGSTFTSEPATVQHGKLFLSPLTPSAVVYTVPNSGQTVGAVKQEGLERGLVFSQLMPVNHSAQVNASLSSENLSGSGLHPLTSSLVNVSAAHGFSLTPPTLLNPTELNPDLAESQPVSAPVASKCTVSSVSNTNYATLQNCSLIPGQDLLSGPMTQAALGEIVPTAEEQVSHASTAVHQDFVREQRLVLQSVPNIKENFLQNSENKATNNLMMLDSKSKYVLDGMVEAGCEDLGTDKKELAKLQTVQLDEDMQDL.

Positions 1 to 10 (MSSSSPTGQI) are enriched in polar residues. Disordered stretches follow at residues 1 to 76 (MSSS…AGAA) and 263 to 313 (WFKN…DGVT). N-acetylserine is present on serine 2. A compositionally biased stretch (low complexity) spans 54–63 (EPGDAAAASR). Positions 216 to 275 (GEETVYCFKEKSRNALKELYKQNRYPSPAEKRHLAKITGLSLTQVSNWFKNRRQRDRNPS) form a DNA-binding region, homeobox. Composition is skewed to basic and acidic residues over residues 271 to 283 (DRNP…KSES) and 292 to 301 (ESSKGHEDLS). The tract at residues 582-775 (AQVNASLSSE…VQLDEDMQDL (194 aa)) is transactivation domain. Residue serine 634 is modified to Phosphoserine.

The protein belongs to the SIX/Sine oculis homeobox family. Interacts with EYA3; acts cooperatively with EYA3 to transactivate target genes through interaction and nuclear translocation of EYA3 protein. In terms of tissue distribution, mainly expressed in the skeletal muscle (isoform 1 and isoform 2 but not isoform 3), and weakly in the heart. Also found in the retina and the distal tube of kidney. Expressed in skeletal muscle, nasal epithelium, cochlea, parathyroid and salivary gland. Expressed in muscle satellite cells of normal and regenerating muscles.

The protein localises to the nucleus. It localises to the cytoplasm. Transcriptional regulator which can act as both a transcriptional repressor and activator by binding a DNA sequence on these target genes and is involved in processes like cell differentiation, cell migration and cell survival. Transactivates gene expression by binding a 5'-[CAT]A[CT][CT][CTG]GA[GAT]-3' motif present in the Trex site and from a 5'-TCA[AG][AG]TTNC-3' motif present in the MEF3 site of the muscle-specific genes enhancer. Acts cooperatively with EYA proteins to transactivate their target genes through interaction and nuclear translocation of EYA protein. Acts synergistically with SIX1 to regulate target genes involved in formation of various organs, including muscle, kidney, gonad, ganglia, olfactory epithelium and cranial skeleton. Plays a role in several important steps of muscle development. Controls the genesis of hypaxial myogenic progenitors in the dermomyotome by transactivating PAX3 and the delamination and migration of the hypaxial precursors from the ventral lip to the limb buds through the transactivation of PAX3, MET and LBX1. Controls myoblast determination by transactivating MYF5, MYOD1 and MYF6. Controls somitic differentiation in myocyte through MYOG transactivation. Plays a role in synaptogenesis and sarcomere organization by participating in myofiber specialization during embryogenesis by activating fast muscle program in the primary myotome resulting in an up-regulation of fast muscle genes, including ATP2A1, MYL1 and TNNT3. Simultaneously, is also able to activate inhibitors of slow muscle genes, such as SOX6, HRASLS, and HDAC4, thereby restricting the activation of the slow muscle genes. During muscle regeneration, negatively regulates differentiation of muscle satellite cells through down-regulation of MYOG expression. During kidney development regulates the early stages of metanephros development and ureteric bud formation through regulation of GDNF, SALL1, PAX8 and PAX2 expression. Plays a role in gonad development by regulating both testis determination and size determination. In gonadal sex determination, transactivates ZFPM2 by binding a MEF3 consensus sequence, resulting in SRY up-regulation. In gonadal size determination, transactivates NR5A1 by binding a MEF3 consensus sequence resulting in gonadal precursor cell formation regulation. During olfactory development mediates the specification and patterning of olfactory placode through fibroblast growth factor and BMP4 signaling pathways and also regulates epithelial cell proliferation during placode formation. Promotes survival of sensory neurons during early trigeminal gangliogenesis. In the developing dorsal root ganglia, up-regulates SLC12A2 transcription. Regulates early thymus/parathyroid organogenesis through regulation of GCM2 and FOXN1 expression. Forms gustatory papillae during development of the tongue. Also plays a role during embryonic cranial skeleton morphogenesis. The sequence is that of Homeobox protein SIX4 (Six4) from Mus musculus (Mouse).